The primary structure comprises 243 residues: tRNA pseudouridine synthase A (243 aa).

Catalysis depends on Asp53, which acts as the Nucleophile. Tyr111 contacts substrate.

It belongs to the tRNA pseudouridine synthase TruA family. As to quaternary structure, homodimer.

It catalyses the reaction uridine(38/39/40) in tRNA = pseudouridine(38/39/40) in tRNA. In terms of biological role, formation of pseudouridine at positions 38, 39 and 40 in the anticodon stem and loop of transfer RNAs. The protein is tRNA pseudouridine synthase A of Pelodictyon phaeoclathratiforme (strain DSM 5477 / BU-1).